A 122-amino-acid chain; its full sequence is Large ribosomal subunit protein bL12 (122 aa).

This sequence belongs to the bacterial ribosomal protein bL12 family. As to quaternary structure, homodimer. Part of the ribosomal stalk of the 50S ribosomal subunit. Forms a multimeric L10(L12)X complex, where L10 forms an elongated spine to which 2 to 4 L12 dimers bind in a sequential fashion. Binds GTP-bound translation factors.

Forms part of the ribosomal stalk which helps the ribosome interact with GTP-bound translation factors. Is thus essential for accurate translation. The chain is Large ribosomal subunit protein bL12 from Buchnera aphidicola subsp. Baizongia pistaciae (strain Bp).